The chain runs to 329 residues: Methionyl-tRNA formyltransferase (329 aa).

112 to 115 contributes to the (6S)-5,6,7,8-tetrahydrofolate binding site; the sequence is SILP.

It belongs to the Fmt family.

The enzyme catalyses L-methionyl-tRNA(fMet) + (6R)-10-formyltetrahydrofolate = N-formyl-L-methionyl-tRNA(fMet) + (6S)-5,6,7,8-tetrahydrofolate + H(+). Functionally, attaches a formyl group to the free amino group of methionyl-tRNA(fMet). The formyl group appears to play a dual role in the initiator identity of N-formylmethionyl-tRNA by promoting its recognition by IF2 and preventing the misappropriation of this tRNA by the elongation apparatus. The protein is Methionyl-tRNA formyltransferase of Shewanella sediminis (strain HAW-EB3).